The chain runs to 232 residues: Small ribosomal subunit protein uS3 (232 aa).

The 69-residue stretch at 39–107 folds into the KH type-2 domain; that stretch reads VRQFLIKELA…PAQINIAEVR (69 aa).

The protein belongs to the universal ribosomal protein uS3 family. As to quaternary structure, part of the 30S ribosomal subunit. Forms a tight complex with proteins S10 and S14.

In terms of biological role, binds the lower part of the 30S subunit head. Binds mRNA in the 70S ribosome, positioning it for translation. This chain is Small ribosomal subunit protein uS3, found in Serratia proteamaculans (strain 568).